The primary structure comprises 326 residues: Sucrose operon repressor (326 aa).

Positions 1–57 constitute an HTH lacI-type domain; that stretch reads MKPKLNDVAKLAGVSATTVSRVINNHGYLSSQTKEKVFAAMRELHYQPNNMARSLQG. Positions 5-24 form a DNA-binding region, H-T-H motif; sequence LNDVAKLAGVSATTVSRVIN.

In terms of biological role, negative regulator of scrB expression. The chain is Sucrose operon repressor (scrR) from Pediococcus pentosaceus.